We begin with the raw amino-acid sequence, 193 residues long: uncharacterized protein (193 aa).

A signal peptide spans Met1–Gly22. The N-palmitoyl cysteine moiety is linked to residue Cys23. The S-diacylglycerol cysteine moiety is linked to residue Cys23.

It is found in the cell membrane. This is an uncharacterized protein from Escherichia coli (strain K12).